Consider the following 383-residue polypeptide: Smad nuclear-interacting protein 1 (383 aa).

Basic and acidic residues predominate over residues 1–10 (MKAGKSERER). Residues 1–209 (MKAGKSERER…NRSKEVPVKE (209 aa)) are disordered. Ser-18 is modified (phosphoserine). Lys-28 is covalently cross-linked (Glycyl lysine isopeptide (Lys-Gly) (interchain with G-Cter in SUMO); alternate). Lys-28 participates in a covalent cross-link: Glycyl lysine isopeptide (Lys-Gly) (interchain with G-Cter in SUMO1); alternate. Lys-28 participates in a covalent cross-link: Glycyl lysine isopeptide (Lys-Gly) (interchain with G-Cter in SUMO2); alternate. A compositionally biased stretch (basic and acidic residues) spans 28-43 (KQERLSPEPVAHRRPD). 3 positions are modified to phosphoserine: Ser-33, Ser-48, and Ser-50. The segment covering 44–56 (APAASLSPPAAEP) has biased composition (low complexity). Residues 59–90 (SGHRGSRARSPAKKKSKSSGRRSKSPRTKRSQ) are compositionally biased toward basic residues. Ser-91 bears the Phosphoserine mark. Basic and acidic residues-rich tracts occupy residues 99–134 (VKQE…ERDR) and 143–159 (RSSD…DRDS). A Glycyl lysine isopeptide (Lys-Gly) (interchain with G-Cter in SUMO2) cross-link involves residue Lys-100. The residue at position 145 (Ser-145) is a Phosphoserine. The stretch at 153–194 (QDRDRDSQNLQAQEEERDFHNARRREHRQQNESAGSEAQEVI) forms a coiled coil. Lys-210 is covalently cross-linked (Glycyl lysine isopeptide (Lys-Gly) (interchain with G-Cter in SUMO2)). In terms of domain architecture, FHA spans 268–331 (YLLGRHRRIA…NGTFLNNKRI (64 aa)). Positions 359–369 (ESSDTSELDRK) are enriched in basic and acidic residues. A disordered region spans residues 359–383 (ESSDTSELDRKEDEDDEEEEMVSDS). Residues 370–383 (EDEDDEEEEMVSDS) show a composition bias toward acidic residues. The residue at position 381 (Ser-381) is a Phosphoserine.

Component of activated spliceosome complexes. Binds SMAD4 and CREBBP/EP300. Component of the minor spliceosome, which splices U12-type introns. Binds the SMAD1/OAZ1/PSMB4 complex. Interacts with DROSHA and SMARCA4. Component of the SNARP complex which consists at least of SNIP1, SNW1, THRAP3, BCLAF1 and PNN. Post-translationally, degraded by the proteasome upon binding to the SMAD1/OAZ1/PSMB4 complex.

It is found in the nucleus. Required for pre-mRNA splicing as component of the spliceosome. As a component of the minor spliceosome, involved in the splicing of U12-type introns in pre-mRNAs. Down-regulates NF-kappa-B signaling by competing with RELA for CREBBP/EP300 binding. Involved in the microRNA (miRNA) biogenesis. May be involved in cyclin-D1/CCND1 mRNA stability through the SNARP complex which associates with both the 3'end of the CCND1 gene and its mRNA. The polypeptide is Smad nuclear-interacting protein 1 (Snip1) (Mus musculus (Mouse)).